A 479-amino-acid chain; its full sequence is ATP synthase subunit beta (479 aa).

ATP is bound at residue 153–160 (GGAGVGKT).

The protein belongs to the ATPase alpha/beta chains family. In terms of assembly, F-type ATPases have 2 components, CF(1) - the catalytic core - and CF(0) - the membrane proton channel. CF(1) has five subunits: alpha(3), beta(3), gamma(1), delta(1), epsilon(1). CF(0) has three main subunits: a(1), b(2) and c(9-12). The alpha and beta chains form an alternating ring which encloses part of the gamma chain. CF(1) is attached to CF(0) by a central stalk formed by the gamma and epsilon chains, while a peripheral stalk is formed by the delta and b chains.

It is found in the cell membrane. The enzyme catalyses ATP + H2O + 4 H(+)(in) = ADP + phosphate + 5 H(+)(out). In terms of biological role, produces ATP from ADP in the presence of a proton gradient across the membrane. The catalytic sites are hosted primarily by the beta subunits. The polypeptide is ATP synthase subunit beta (Lactobacillus helveticus (strain DPC 4571)).